The sequence spans 160 residues: MLRSIIGKSASRSLNFVAKRSYAEAAAASSGLKLQFALPHETLYSGSEVTQVNLPAKSGRIGVLANHVPTVEQLLPGVVEVMEGSNSKKFFISGGFATVQPDSQLCVTAIEAFPLESFSQENIKNLLAEAKKNVSSSDAREAAEAAIQVEVLENLQSVLK.

Residues 1–22 (MLRSIIGKSASRSLNFVAKRSY) constitute a mitochondrion transit peptide.

It belongs to the ATPase epsilon chain family. As to quaternary structure, F-type ATPases have 2 components, CF(1) - the catalytic core - and CF(0) - the membrane proton channel. CF(1) has five subunits: alpha(3), beta(3), gamma(1), delta(1), epsilon(1). CF(0) has three main subunits: a, b and c.

It is found in the mitochondrion. The protein localises to the mitochondrion inner membrane. Functionally, mitochondrial membrane ATP synthase (F(1)F(0) ATP synthase or Complex V) produces ATP from ADP in the presence of a proton gradient across the membrane which is generated by electron transport complexes of the respiratory chain. F-type ATPases consist of two structural domains, F(1) - containing the extramembraneous catalytic core, and F(0) - containing the membrane proton channel, linked together by a central stalk and a peripheral stalk. During catalysis, ATP turnover in the catalytic domain of F(1) is coupled via a rotary mechanism of the central stalk subunits to proton translocation. Part of the complex F(1) domain and of the central stalk which is part of the complex rotary element. Rotation of the central stalk against the surrounding alpha(3)beta(3) subunits leads to hydrolysis of ATP in three separate catalytic sites on the beta subunits. The sequence is that of ATP synthase subunit delta, mitochondrial (ATP16) from Saccharomyces cerevisiae (strain ATCC 204508 / S288c) (Baker's yeast).